The following is an 89-amino-acid chain: Small ribosomal subunit protein uS15 (89 aa).

The protein belongs to the universal ribosomal protein uS15 family. As to quaternary structure, part of the 30S ribosomal subunit. Forms a bridge to the 50S subunit in the 70S ribosome, contacting the 23S rRNA.

One of the primary rRNA binding proteins, it binds directly to 16S rRNA where it helps nucleate assembly of the platform of the 30S subunit by binding and bridging several RNA helices of the 16S rRNA. Its function is as follows. Forms an intersubunit bridge (bridge B4) with the 23S rRNA of the 50S subunit in the ribosome. The sequence is that of Small ribosomal subunit protein uS15 from Streptococcus pyogenes serotype M1.